Reading from the N-terminus, the 1270-residue chain is MITNQTERLNFASTKNIPDYPDFLDVQVKSFKDFFQLETKSDERGNEGLYNTFMENFPITDTRNNFVLEFLDYFVDPPRYTIQECIERGLTYSVPLKARLKLYCTDPEHEDFETIVQDVYLGTIPYMTPSGTFVINGAECVVVSQLHRSPGVFFGQSFHANGTKLYSARVIPFKGSWIEFSTDINSVMYAYIDRKKKLPVTTLFRAIGFERDKDILEIFDLAEEIKVSKTGIKKYIGRRLAARVLNTWHEDFVDEDTGEVVSIERNEIILDRDTIIDKDNVEEIIDSNVKSILLHKEDNNQADYAIIHNTLQKDPTNSEKEAVEHIYRQLRNAEPPDEETARGIIDKLFFSDQRYNLGEVGRYRMNKKLDLDIPMDKQVLTKEDIITIVKYLIELINSKAEIDDIDHLSNRRVRTVGEQLSQQFGVGLARMARTIRERMNVRDNEVFTPIDLINAKTLSSVINSFFGTNQLSQFMDQTNPLAEITHKRRLSALGPGGLSRERAGFEVRDVHYTHYGRLCPIETPEGPNIGLISSLGVYAKVNGMGFIETPYRKVTDGVVDLESAPIYLSAEEEEGKMIAQANIEMDASGKITASNVIAREEGDFPVVEPSSVHYTDVAPNQIASISASLIPFLEHDDANRALMGSNMMRQAVPLIRPEAPIVGTGLERQVASDSRVLINAEGHGTVEYVDANIITIKYDRTEDERMVSFDADEKTYNLIKFRKTNQGTSINLKPIVRRGDRVVPGQVLSEGYATQNGELALGRNLKVAFMPWKGYNFEDAIVISEKVVRDDIFTSIHVDDYSLEVRDTKLGNEELTNDIPNVSEEATKDLDENGMIRIGAEVKPGDILIGKITPKGESDPTPEEKLLRAIFGDKAGDVKDASLKASPSLHGVVLDKKLFARAVKDKRKRTQDKDALGALEMEFETKFVELKDRLVEKLFLIVNGKTSQGVMNDLGEEVLPKGKKYTQKMLYAVEDFAHLSKGQWVADDATNKMVNDLIHNYKIKLNDLQGALRREKFTITVGDELPSGILKLAKIYIAKKRKLKVGDKMAGRHGNKGIVARIVRHEDMPFLEDGTPVDIVLNPLGVPSRMNIGQIYETVLGWAGMNLGRKFATPIFDGASLDEINALTDEANVPRFGHTYLYDGGTGERFAQKATVGVIYMLKLGHMVDDKMHARSIGPYSLITQQPLGGKAQFGGQRFGEMEVWALEAYGASSTLREILTVKSDDVIGRAKTYEAIVKGETMPEPGLPESFNVLMHELKGLGLDLRLEE.

Belongs to the RNA polymerase beta chain family. In terms of assembly, the RNAP catalytic core consists of 2 alpha, 1 beta, 1 beta' and 1 omega subunit. When a sigma factor is associated with the core the holoenzyme is formed, which can initiate transcription.

The catalysed reaction is RNA(n) + a ribonucleoside 5'-triphosphate = RNA(n+1) + diphosphate. Functionally, DNA-dependent RNA polymerase catalyzes the transcription of DNA into RNA using the four ribonucleoside triphosphates as substrates. The sequence is that of DNA-directed RNA polymerase subunit beta from Flavobacterium johnsoniae (strain ATCC 17061 / DSM 2064 / JCM 8514 / BCRC 14874 / CCUG 350202 / NBRC 14942 / NCIMB 11054 / UW101) (Cytophaga johnsonae).